A 754-amino-acid chain; its full sequence is Ribonucleoside-diphosphate reductase subunit alpha (754 aa).

The region spanning 4-93 (INVIKSSGVS…MFALRKHVYG (90 aa)) is the ATP-cone domain. Substrate contacts are provided by residues Thr-206, 221-222 (SC), Gly-250, 435-439 (NLCCE), and 615-619 (PCESS). A disulfide bridge connects residues Cys-222 and Cys-457. The active-site Proton acceptor is Asn-435. Cys-437 functions as the Cysteine radical intermediate in the catalytic mechanism. The active-site Proton acceptor is Glu-439. The tract at residues 621-641 (QVSNSTNGYEPPRGPVSVKES) is disordered.

It belongs to the ribonucleoside diphosphate reductase large chain family. As to quaternary structure, heterodimer of a large and a small subunit.

The catalysed reaction is a 2'-deoxyribonucleoside 5'-diphosphate + [thioredoxin]-disulfide + H2O = a ribonucleoside 5'-diphosphate + [thioredoxin]-dithiol. Under complex allosteric control mediated by deoxynucleoside triphosphates and ATP binding. The type of nucleotide bound at the specificity site determines substrate preference. It seems probable that ATP makes the enzyme reduce CDP and UDP, dGTP favors ADP reduction and dTTP favors GDP reduction. Functionally, provides the precursors necessary for DNA synthesis. Catalyzes the biosynthesis of deoxyribonucleotides from the corresponding ribonucleotides. This is Ribonucleoside-diphosphate reductase subunit alpha (NRDA) from Escherichia coli (Bacteriophage T4).